A 425-amino-acid polypeptide reads, in one-letter code: Nucleoporin nup45 (425 aa).

Over residues 1–10 (MFGLNKTPSF) the composition is skewed to polar residues. Residues 1–207 (MFGLNKTPSF…GFGLSNNTQT (207 aa)) are disordered. Residues 11–27 (GSTGTQNQNTGTSAGTG) show a composition bias toward low complexity. Polar residues predominate over residues 28–45 (LFSSNTFGNNTQANTPAS). The span at 47–56 (GFGGVTGGAF) shows a compositional bias: gly residues. Positions 72 to 89 (PNATSTTPGLNLFGQNPQ) are enriched in polar residues. Low complexity-rich tracts occupy residues 112-126 (NQNQ…AAPT) and 135-150 (QNQT…ANTS). Polar residues predominate over residues 167–207 (NRPNTSTFGQFSTQPASAGLFGQSTQPSGSTGFGLSNNTQT). A phosphoserine mark is found at Ser289 and Ser290.

The protein localises to the cytoplasm. Its subcellular location is the nucleus. The protein resides in the nuclear pore complex. Functionally, functions as a component of the nuclear pore complex (NPC). NPC components, collectively referred to as nucleoporins (NUPs), can play the role of both NPC structural components and of docking or interaction partners for transiently associated nuclear transport factors. Active directional transport is assured by both, a Phe-Gly (FG) repeat affinity gradient for these transport factors across the NPC and a transport cofactor concentration gradient across the nuclear envelope. This is Nucleoporin nup45 (nup45) from Schizosaccharomyces pombe (strain 972 / ATCC 24843) (Fission yeast).